The primary structure comprises 268 residues: UDP-2,3-diacylglucosamine hydrolase (268 aa).

Positions 25, 27, 58, 97, and 132 each coordinate Mn(2+). 97 to 98 (NR) contributes to the substrate binding site. Asp-140, Ser-178, Glu-191, and His-222 together coordinate substrate. His-222 and His-224 together coordinate Mn(2+).

This sequence belongs to the LpxH family. Requires Mn(2+) as cofactor.

Its subcellular location is the cell inner membrane. The enzyme catalyses UDP-2-N,3-O-bis[(3R)-3-hydroxytetradecanoyl]-alpha-D-glucosamine + H2O = 2-N,3-O-bis[(3R)-3-hydroxytetradecanoyl]-alpha-D-glucosaminyl 1-phosphate + UMP + 2 H(+). It participates in glycolipid biosynthesis; lipid IV(A) biosynthesis; lipid IV(A) from (3R)-3-hydroxytetradecanoyl-[acyl-carrier-protein] and UDP-N-acetyl-alpha-D-glucosamine: step 4/6. Functionally, hydrolyzes the pyrophosphate bond of UDP-2,3-diacylglucosamine to yield 2,3-diacylglucosamine 1-phosphate (lipid X) and UMP by catalyzing the attack of water at the alpha-P atom. Involved in the biosynthesis of lipid A, a phosphorylated glycolipid that anchors the lipopolysaccharide to the outer membrane of the cell. This is UDP-2,3-diacylglucosamine hydrolase from Ralstonia nicotianae (strain ATCC BAA-1114 / GMI1000) (Ralstonia solanacearum).